A 115-amino-acid polypeptide reads, in one-letter code: Flagellar transcriptional regulator FlhD (115 aa).

Belongs to the FlhD family. In terms of assembly, homodimer; disulfide-linked. Forms a heterohexamer composed of two FlhC and four FlhD subunits. Each FlhC binds a FlhD dimer, forming a heterotrimer, and a hexamer assembles by dimerization of two heterotrimers.

It localises to the cytoplasm. Its function is as follows. Functions in complex with FlhC as a master transcriptional regulator that regulates transcription of several flagellar and non-flagellar operons by binding to their promoter region. Activates expression of class 2 flagellar genes, including fliA, which is a flagellum-specific sigma factor that turns on the class 3 genes. Also regulates genes whose products function in a variety of physiological pathways. This Edwardsiella ictaluri (strain 93-146) protein is Flagellar transcriptional regulator FlhD.